We begin with the raw amino-acid sequence, 89 residues long: Co-chaperonin GroES (89 aa).

This sequence belongs to the GroES chaperonin family. In terms of assembly, heptamer of 7 subunits arranged in a ring. Interacts with the chaperonin GroEL.

Its subcellular location is the cytoplasm. In terms of biological role, together with the chaperonin GroEL, plays an essential role in assisting protein folding. The GroEL-GroES system forms a nano-cage that allows encapsulation of the non-native substrate proteins and provides a physical environment optimized to promote and accelerate protein folding. GroES binds to the apical surface of the GroEL ring, thereby capping the opening of the GroEL channel. The chain is Co-chaperonin GroES from Wolinella succinogenes (strain ATCC 29543 / DSM 1740 / CCUG 13145 / JCM 31913 / LMG 7466 / NCTC 11488 / FDC 602W) (Vibrio succinogenes).